The sequence spans 645 residues: 1-deoxy-D-xylulose-5-phosphate synthase 2 (645 aa).

Thiamine diphosphate-binding positions include H79 and 120 to 122 (GHS). Position 151 (D151) interacts with Mg(2+). Thiamine diphosphate is bound by residues 152–153 (GS), N180, Y291, and E373. N180 is a binding site for Mg(2+).

This sequence belongs to the transketolase family. DXPS subfamily. Homodimer. Mg(2+) is required as a cofactor. The cofactor is thiamine diphosphate.

The enzyme catalyses D-glyceraldehyde 3-phosphate + pyruvate + H(+) = 1-deoxy-D-xylulose 5-phosphate + CO2. It functions in the pathway metabolic intermediate biosynthesis; 1-deoxy-D-xylulose 5-phosphate biosynthesis; 1-deoxy-D-xylulose 5-phosphate from D-glyceraldehyde 3-phosphate and pyruvate: step 1/1. Functionally, catalyzes the acyloin condensation reaction between C atoms 2 and 3 of pyruvate and glyceraldehyde 3-phosphate to yield 1-deoxy-D-xylulose-5-phosphate (DXP). The chain is 1-deoxy-D-xylulose-5-phosphate synthase 2 from Rhodospirillum rubrum (strain ATCC 11170 / ATH 1.1.1 / DSM 467 / LMG 4362 / NCIMB 8255 / S1).